Here is a 490-residue protein sequence, read N- to C-terminus: Phosphoglucosamine mutase (490 aa).

Ser-139 serves as the catalytic Phosphoserine intermediate. Mg(2+)-binding residues include Ser-139, Asp-279, Asp-281, and Asp-283. Ser-139 is modified (phosphoserine).

Belongs to the phosphohexose mutase family. Mg(2+) serves as cofactor. Post-translationally, activated by phosphorylation.

It catalyses the reaction alpha-D-glucosamine 1-phosphate = D-glucosamine 6-phosphate. In terms of biological role, catalyzes the conversion of glucosamine-6-phosphate to glucosamine-1-phosphate. The sequence is that of Phosphoglucosamine mutase from Trichormus variabilis (strain ATCC 29413 / PCC 7937) (Anabaena variabilis).